The following is a 1321-amino-acid chain: MLRNGSLRQSLRTLDSFSLAPEDVLKTAIKTVEDYEGDNIDSNGEIKITRDAKEEVVNKVSIPQLYRYTTTLEKLLLFIGTLVAVITGAGLPLMSILQGKVSQAFINEQIVINNNGSTFLPTGQNYTKTDFEHDVMNVVWSYAAMTVGMWAAGQITVTCYLYVAEQMNNRLRREFVKSILRQEISWFDTNHSGTLATKLFDNLERVKEGTGDKIGMAFQYLSQFITGFIVAFTHSWQLTLVMLAVTPIQALCGFAIAKSMSTFAIRETLRYAKAGKVVEETISSIRTVVSLNGLRYELERYSTAVEEAKKAGVLKGLFLGISFGAMQASNFISFALAFYIGVGWVHDGSLNFGDMLTTFSSVMMGSMALGLAGPQLAVLGTAQGAASGIYEVLDRKPVIDSSSKAGRKDMKIKGDITVENVHFTYPSRPDVPILRGMNLRVNAGQTVALVGSSGCGKSTIISLLLRYYDVLKGKITIDGVDVRDINLEFLRKNVAVVSQEPALFNCTIEENISLGKEGITREEMVAACKMANAEKFIKTLPNGYNTLVGDRGTQLSGGQKQRIAIARALVRNPKILLLDEATSALDAESEGIVQQALDKAAKGRTTIIIAHRLSTIRNADLIISCKNGQVVEVGDHRALMAQQGLYYDLVTAQTFTDAVDSAAEGKFSRENSVARQTSEHEGLSRQASEMDDIMNRVRSSTIGSITNGPVIDEKEERIGKDALSRLKQELEENNAQKTNLFEILYHARPHALSLFIGMSTATIGGFIYPTYSVFFTSFMNVFAGNPADFLSQGHFWALMFLVLAAAQGICSFLMTFFMGIASESLTRDLRNKLFRNVLSQHIGFFDSPQNASGKISTRLATDVPNLRTAIDFRFSTVITTLVSMVAGIGLAFFYGWQMALLIIAILPIVAFGQYLRGRRFTGKNVKSASEFADSGKIAIEAIENVRTVQALAREDTFYENFCEKLDIPHKEAIKEAFIQGLSYGCASSVLYLLNTCAYRMGLALIITDPPTMQPMRVLRVMYAITISTSTLGFATSYFPEYAKATFAGGIIFGMLRKISKIDSLSLAGEKKKLYGKVIFKNVRFAYPERPEIEILKGLSFSVEPGQTLALVGPSGCGKSTVVALLERFYDTLGGEIFIDGSEIKTLNPEHTRSQIAIVSQEPTLFDCSIAENIIYGLDPSSVTMAQVEEAARLANIHNFIAELPEGFETRVGDRGTQLSGGQKQRIAIARALVRNPKILLLDEATSALDTESEKVVQEALDRAREGRTCIVIAHRLNTVMNADCIAVVSNGTIIEKGTHTQLMSEKGAYYKLTQKQMTEKK.

Over 1–77 the chain is Cytoplasmic; it reads MLRNGSLRQS…YTTTLEKLLL (77 aa). Residues 77-381 enclose the ABC transmembrane type-1 1 domain; that stretch reads LFIGTLVAVI…AGPQLAVLGT (305 aa). A helical transmembrane segment spans residues 78 to 98; that stretch reads FIGTLVAVITGAGLPLMSILQ. Residues N115 and N125 are each glycosylated (N-linked (GlcNAc...) asparagine). Residues 144 to 164 form a helical membrane-spanning segment; the sequence is AMTVGMWAAGQITVTCYLYVA. The N-linked (GlcNAc...) asparagine glycan is linked to N190. Helical transmembrane passes span 213–233, 240–260, 321–341, and 350–370; these read KIGM…VAFT, LVML…AKSM, ISFG…FYIG, and LNFG…MALG. The Cytoplasmic portion of the chain corresponds to 371 to 753; that stretch reads LAGPQLAVLG…LYHARPHALS (383 aa). One can recognise an ABC transporter 1 domain in the interval 416–652; that stretch reads ITVENVHFTY…QGLYYDLVTA (237 aa). ATP is bound at residue 451 to 458; sequence GSSGCGKS. Helical transmembrane passes span 754-774 and 798-818; these read LFIG…YSVF and LMFL…TFFM. In terms of domain architecture, ABC transmembrane type-1 2 spans 754–1043; the sequence is LFIGMSTATI…ATSYFPEYAK (290 aa). Residue N850 is glycosylated (N-linked (GlcNAc...) asparagine). 4 helical membrane-spanning segments follow: residues 874–894, 895–915, 978–998, and 1017–1037; these read FSTV…AFFY, GWQM…GQYL, IQGL…TCAY, and VLRV…ATSY. The Cytoplasmic portion of the chain corresponds to 1038-1321; the sequence is FPEYAKATFA…LTQKQMTEKK (284 aa). Residues 1077–1315 form the ABC transporter 2 domain; sequence VIFKNVRFAY…KGAYYKLTQK (239 aa). Residue 1112-1119 coordinates ATP; it reads GPSGCGKS.

It belongs to the ABC transporter superfamily. ABCB family. Multidrug resistance exporter (TC 3.A.1.201) subfamily. As to expression, intestinal cells.

It localises to the membrane. It catalyses the reaction ATP + H2O + xenobioticSide 1 = ADP + phosphate + xenobioticSide 2.. Functionally, energy-dependent efflux pump responsible for decreased drug accumulation in multidrug-resistant cells. The protein is Multidrug resistance protein pgp-1 (pgp-1) of Caenorhabditis elegans.